A 205-amino-acid polypeptide reads, in one-letter code: Disintegrin-like leberagin-C (205 aa).

Residues 4–90 (PPVCGNELLE…DCPIDRFHRN (87 aa)) form the Disintegrin domain. Cystine bridges form between C7/C26, C18/C36, C62/C82, C69/C94, C101/C106, C113/C128, C151/C158, C163/C171, and C193/C198. Positions 68-70 (ECD) match the D/ECD-tripeptide motif. N-linked (GlcNAc...) asparagine glycosylation is present at N120.

This sequence belongs to the venom metalloproteinase (M12B) family. P-III subfamily. P-IIIb sub-subfamily. Monomer. In terms of tissue distribution, expressed by the venom gland.

It is found in the secreted. Its function is as follows. Inhibits platelet aggregation induced by thrombin and arachidonic acid with IC(50) of 40 and 50 nM respectively (in rabbit platetelet-rich plasma). It also inhibits the adhesion of melanoma tumor cells on fibrinogen and fibronectin, by interfering with the function of alpha-V/beta-3 (ITGAV/ITGB3) and, to a lesser extent, with alpha-V/beta-6 (ITGAV/ITGB6) and alpha-5/beta-1 (ITGA5/ITGB1) integrins. This chain is Disintegrin-like leberagin-C, found in Macrovipera lebetina transmediterranea (Blunt-nosed viper).